The primary structure comprises 60 residues: UPF0434 protein YE1549 (60 aa).

This sequence belongs to the UPF0434 family.

The protein is UPF0434 protein YE1549 of Yersinia enterocolitica serotype O:8 / biotype 1B (strain NCTC 13174 / 8081).